A 1228-amino-acid polypeptide reads, in one-letter code: Minor fimbrium subunit Mfa5 (1228 aa).

The first 25 residues, 1 to 25 (MMKRYTIILAVFLLFCTVFTFQIKA), serve as a signal peptide directing secretion. The VWFA domain occupies 144-267 (DVVMVIDQSS…QYPVKNVTTA (124 aa)).

In terms of assembly, minor fimbriae are composed of a structural subunit, most often Mfa1, and the accessory subunits Mfa3, Mfa4 and Mfa5. Fimbrium assembly occurs by linear, head-to-tail oligomerization of fimbrial subunits. This is mediated via insertion of a C-terminal beta-strand from one subunit into a groove in the N-terminal domain of the following subunit.

It localises to the fimbrium. In terms of biological role, accessory subunit of the minor fimbriae. These filamentous pili are attached to the cell surface; they mediate biofilm formation, adhesion onto host cells and onto other bacteria that are part of the oral microbiome. They play an important role in invasion of periodontal tissues and are recognized as major virulence factors. Fimbrium subunits from different strains have highly divergent sequences, and this correlates with pathogenicity. In Porphyromonas gingivalis (strain ATCC 33277 / DSM 20709 / CIP 103683 / JCM 12257 / NCTC 11834 / 2561), this protein is Minor fimbrium subunit Mfa5.